A 435-amino-acid chain; its full sequence is DMATS-type prenyltransferase fscG (435 aa).

Dimethylallyl diphosphate contacts are provided by arginine 111, lysine 193, tyrosine 195, arginine 259, lysine 261, tyrosine 263, tyrosine 352, and tyrosine 423.

This sequence belongs to the tryptophan dimethylallyltransferase family.

The protein operates within secondary metabolite biosynthesis. Functionally, DMATS-type prenyltransferase; part of the fragmented gene cluster that mediates the biosynthesis of fusarochromene, a tryptophan-derived metabolite closely related to a group of mycotoxins including fusarochromanone. Within the pathway, fscG catalyzes the prenylation of the primary alcohol produced by fscA which is necessary for the formation of the chromene ring by the oxidoreductase fscI. The first step of the pathway is the epimerization of L-tryptophan to D-tryptophan in the presence of the NRPS-like tryptophan epimerase fscC. D-tryptophan is subsequently hydroxylated by the tryptophan 6-hydroxylase fscE to yield 6-hydroxytryptophan. The pyrrole ring undergoes cleavaged by the tryptophan 2,3-dioxygenase fscD and is finally converted to 4-hydroxykyrunenine by the hydrolase fscH. The NRPS-like oxidoreductase fscA reduces the carboxyl group to primary alcohol and the DMATS-type prenyltransferase fscG performs prenylation, followed by the formation of a chromene ring catalyzed by the oxidoreductase fscI, which leads to desacetylfusarochromene. Epoxidation by fscF and rearrangement reactions of chromene double bonds convert compound desacetylfusarochromene to fusarochromanones. Although specific acetyltransferases were not found near the fsc gene cluster, several predicted enzymes containing the N-acetyltransferase superfamily domain are present in the genome of F.equiseti. These predicted enzymes may have the potential to convert desacetylfusarochromene to fusarochromene. The sequence is that of DMATS-type prenyltransferase fscG from Fusarium equiseti (Fusarium scirpi).